We begin with the raw amino-acid sequence, 439 residues long: Serine hydroxymethyltransferase (439 aa).

(6S)-5,6,7,8-tetrahydrofolate is bound by residues Leu-134 and 138–140 (GHL). At Lys-243 the chain carries N6-(pyridoxal phosphate)lysine.

It belongs to the SHMT family. As to quaternary structure, homodimer. Requires pyridoxal 5'-phosphate as cofactor.

It localises to the cytoplasm. The enzyme catalyses (6R)-5,10-methylene-5,6,7,8-tetrahydrofolate + glycine + H2O = (6S)-5,6,7,8-tetrahydrofolate + L-serine. It functions in the pathway one-carbon metabolism; tetrahydrofolate interconversion. Its pathway is amino-acid biosynthesis; glycine biosynthesis; glycine from L-serine: step 1/1. Functionally, catalyzes the reversible interconversion of serine and glycine with tetrahydrofolate (THF) serving as the one-carbon carrier. This reaction serves as the major source of one-carbon groups required for the biosynthesis of purines, thymidylate, methionine, and other important biomolecules. Also exhibits THF-independent aldolase activity toward beta-hydroxyamino acids, producing glycine and aldehydes, via a retro-aldol mechanism. This chain is Serine hydroxymethyltransferase, found in Brucella anthropi (strain ATCC 49188 / DSM 6882 / CCUG 24695 / JCM 21032 / LMG 3331 / NBRC 15819 / NCTC 12168 / Alc 37) (Ochrobactrum anthropi).